A 158-amino-acid chain; its full sequence is PRA1 family protein 2 (158 aa).

4 consecutive transmembrane segments (helical) span residues asparagine 36–threonine 58, leucine 62–valine 79, phenylalanine 88–isoleucine 108, and glycine 113–leucine 133.

It belongs to the PRA1 family.

It is found in the membrane. Its function is as follows. May act as a general Rab protein regulator. This chain is PRA1 family protein 2 (prafB), found in Dictyostelium discoideum (Social amoeba).